A 1756-amino-acid polypeptide reads, in one-letter code: Protein TIC 214 (1756 aa).

A run of 6 helical transmembrane segments spans residues 18–38 (VSGP…LPFG), 54–74 (GYGI…FLSM), 79–99 (IYAA…YMFF), 128–148 (LFMD…NPVL), 163–183 (ISFM…LTIF), and 210–230 (FSLL…LPFL). Residues 1469–1504 (KNKQVEDGQDKNGQVEDQDGQDQDGQVEDQQTDGKK) form a disordered region. Residues 1471-1482 (KQVEDGQDKNGQ) show a composition bias toward basic and acidic residues. Positions 1484 to 1499 (EDQDGQDQDGQVEDQQ) are enriched in acidic residues.

This sequence belongs to the TIC214 family. As to quaternary structure, part of the Tic complex.

The protein resides in the plastid. The protein localises to the chloroplast inner membrane. In terms of biological role, involved in protein precursor import into chloroplasts. May be part of an intermediate translocation complex acting as a protein-conducting channel at the inner envelope. The polypeptide is Protein TIC 214 (Pinus thunbergii (Japanese black pine)).